The sequence spans 239 residues: Proteasome subunit beta (239 aa).

Polar residues predominate over residues 1 to 16 (MRQPDSSLPRTGQDHT). Residues 1-32 (MRQPDSSLPRTGQDHTLSPYEPELGEVPSNDL) form a disordered region. Positions 1 to 44 (MRQPDSSLPRTGQDHTLSPYEPELGEVPSNDLSMADLDNVNKTG) are cleaved as a propeptide — removed in mature form; by autocatalysis. T45 serves as the catalytic Nucleophile.

It belongs to the peptidase T1B family. As to quaternary structure, the 20S proteasome core is composed of 14 alpha and 14 beta subunits that assemble into four stacked heptameric rings, resulting in a barrel-shaped structure. The two inner rings, each composed of seven catalytic beta subunits, are sandwiched by two outer rings, each composed of seven alpha subunits. The catalytic chamber with the active sites is on the inside of the barrel. Has a gated structure, the ends of the cylinder being occluded by the N-termini of the alpha-subunits. Is capped at one or both ends by the proteasome regulatory ATPase, PAN.

It is found in the cytoplasm. It catalyses the reaction Cleavage of peptide bonds with very broad specificity.. The formation of the proteasomal ATPase PAN-20S proteasome complex, via the docking of the C-termini of PAN into the intersubunit pockets in the alpha-rings, triggers opening of the gate for substrate entry. Interconversion between the open-gate and close-gate conformations leads to a dynamic regulation of the 20S proteasome proteolysis activity. Its function is as follows. Component of the proteasome core, a large protease complex with broad specificity involved in protein degradation. The sequence is that of Proteasome subunit beta from Natronomonas pharaonis (strain ATCC 35678 / DSM 2160 / CIP 103997 / JCM 8858 / NBRC 14720 / NCIMB 2260 / Gabara) (Halobacterium pharaonis).